Reading from the N-terminus, the 561-residue chain is MLSRISERCTAVTGLEQVLCRHVWSAAWLRDAEPAAAASQSIDLSCLMERAGLAAYDVFASLYASQRHWLILVGSGNNGGDGYVIARHAREAGRKVTVLSMPHSKPLPTEATNAQHAWQAVGGTETMINPGTSLHLPTDVDLVVDGLLGTGISGPPREHYEEVIRHINALPVPRVAIDIPSGLNAETGEAAGACVKADHTATFICLKPGLLTGQARDYVGQLHYRSLGLEEWMIAAERMDAALCRRVALGDVYGYFSTRRSAVAHKGSCGKVVLIGGDHGFGGAILMSAEACLTIGAGLTRVLTRPEYVAPLLTRCPEVMVTAVETETSGQLEQQMVEAFEWASTLAVGPGLGTGAYGQAALSAALQQAEMHQDKTLVLDADALNLLAERLHSKEMGAAVGAGKYLPVLPNSIITPHPGEAARLLACRVADVEKDRLAAARRLAAILGGTCLLKGPGTVVHCQSSGKTAIVDAGNAGMASGGMGDVLTGLLAGLAAQRMMHDTFDTTCAAALVHGVAADMVAAEDGRGTRGIRATELIPRIPFIVNASVPSSATQQRPSGL.

The NAD(P)H-hydrate epimerase stretch occupies residues 1 to 241 (MLSRISERCT…WMIAAERMDA (241 aa)). The region spanning 29 to 235 (LRDAEPAAAA…SLGLEEWMIA (207 aa)) is the YjeF N-terminal domain. The segment at 77–81 (NNGGD) is NADPHX 1; for epimerase activity. Asn78 and Asp145 together coordinate K(+). The interval 149 to 155 (GTGISGP) is NADPHX 1; for epimerase activity. Residues Tyr160 and Asp178 each contribute to the (6S)-NADPHX site. Ser181 is a K(+) binding site. Positions 249–548 (LGDVYGYFST…PRIPFIVNAS (300 aa)) constitute a YjeF C-terminal domain. Positions 249-561 (LGDVYGYFST…SATQQRPSGL (313 aa)) are ADP-dependent (S)-NAD(P)H-hydrate dehydratase. Gly351 serves as a coordination point for (6S)-NADPHX. The segment at 417–423 (HPGEAAR) is NADPHX 2; for dehydratase activity. Residues 454 to 458 (KGPGT) and 475 to 484 (NAGMASGGMG) contribute to the ADP site. Asp485 is a binding site for (6S)-NADPHX.

The protein in the N-terminal section; belongs to the NnrE/AIBP family. This sequence in the C-terminal section; belongs to the NnrD/CARKD family. K(+) serves as cofactor.

It catalyses the reaction (6S)-NADHX + ADP = AMP + phosphate + NADH + H(+). The enzyme catalyses (6S)-NADPHX + ADP = AMP + phosphate + NADPH + H(+). The catalysed reaction is (6R)-NADHX = (6S)-NADHX. It carries out the reaction (6R)-NADPHX = (6S)-NADPHX. Bifunctional enzyme that catalyzes the epimerization of the S- and R-forms of NAD(P)HX and the dehydration of the S-form of NAD(P)HX at the expense of ADP, which is converted to AMP. This allows the repair of both epimers of NAD(P)HX, a damaged form of NAD(P)H that is a result of enzymatic or heat-dependent hydration. This is Bifunctional NAD(P)H-hydrate repair enzyme from Leishmania braziliensis.